The chain runs to 79 residues: Tau-theraphotoxin-Hs1a (79 aa).

Disulfide bonds link C2-C16, C9-C23, C15-C31, C44-C58, C51-C63, and C57-C71. 2 Domain repeats span residues 2 to 31 and 42 to 71; these read CAKE…IPHC and TNCA…IPYC. A 2 X approximate repeats with cysteine pattern C-C-CC-C-C region spans residues 2–71; sequence CAKEGEVCSW…DCPLAFIPYC (70 aa).

This sequence belongs to the neurotoxin 23 family. Double-knot toxin subfamily. In terms of assembly, interacts with TRPV1 (2 toxins (4 moieties) bind 1 channel (homotetramer)). In terms of tissue distribution, expressed by the venom gland.

The protein resides in the secreted. Selectively activates the heat-activated TRPV1 channel. It binds to TRPV1 in an open state-dependent manner, trapping it there to produce irreversible currents. It binds to the outer edge of the external pore of TRPV1 in a counterclockwise configuration, using a limited protein-protein interface and inserting hydrophobic residues into the bilayer. It also partitions naturally into membranes, with the two lobes exhibiting opposing energetics for membrane partitioning (K1) and channel activation (K2). In addition, the toxin disrupts a cluster of hydrophobic residues behind the selectivity filter that are critical for channel activation. This is Tau-theraphotoxin-Hs1a from Cyriopagopus schmidti (Chinese bird spider).